Here is a 145-residue protein sequence, read N- to C-terminus: Ribonuclease H (145 aa).

Residues 1–142 form the RNase H type-1 domain; it reads MKEVVIYTDG…CDEIARSMIK (142 aa). Mg(2+) is bound by residues Asp-9, Glu-47, Asp-69, and Asp-134.

This sequence belongs to the RNase H family. Monomer. Mg(2+) is required as a cofactor.

It localises to the cytoplasm. It catalyses the reaction Endonucleolytic cleavage to 5'-phosphomonoester.. Its function is as follows. Endonuclease that specifically degrades the RNA of RNA-DNA hybrids. The chain is Ribonuclease H from Caldicellulosiruptor saccharolyticus (strain ATCC 43494 / DSM 8903 / Tp8T 6331).